Here is a 305-residue protein sequence, read N- to C-terminus: RxLR effector protein PexRD25 (305 aa).

A signal peptide spans 1–16; sequence MRFLFYMLLACSAVVA. The RxLR-dEER signature appears at 44–56; the sequence is RLLRDRRSVDEER.

The protein belongs to the RxLR effector family.

It is found in the secreted. The protein localises to the host nucleus. The protein resides in the host nucleolus. In terms of biological role, effector that enhances P.infestans colonization of Nicotiana benthamiana leaves. The protein is RxLR effector protein PexRD25 of Phytophthora infestans (strain T30-4) (Potato late blight agent).